Reading from the N-terminus, the 150-residue chain is CCAAT/enhancer-binding protein gamma (150 aa).

Lysine 3 participates in a covalent cross-link: Glycyl lysine isopeptide (Lys-Gly) (interchain with G-Cter in SUMO2). The tract at residues 27 to 94 (GLQQVPQLVP…QKAQDTLQRV (68 aa)) is disordered. Low complexity predominate over residues 28-37 (LQQVPQLVPA). The span at 56–72 (SPMDRNSDEYRQRRERN) shows a compositional bias: basic and acidic residues. One can recognise a bZIP domain in the interval 62 to 125 (SDEYRQRRER…SVLKDLFLEH (64 aa)). Residues 66–93 (RQRRERNNMAVKKSRLKSKQKAQDTLQR) are basic motif. Positions 97–118 (LKEENERLEAKIKLLTKELSVL) are leucine-zipper.

This sequence belongs to the bZIP family. C/EBP subfamily. As to quaternary structure, binds DNA as a dimer and can form stable heterodimers with CEBPA and CEBPB. Interacts with ZNF638; this interaction increases transcriptional activation.

Its subcellular location is the nucleus. Transcription factor that binds to the promoter and the enhancer regions of target genes. Binds to the enhancer element PRE-I (positive regulatory element-I) of the IL-4 gene. Binds to the promoter and the enhancer of the immunoglobulin heavy chain. Binds to GPE1, a cis-acting element in the G-CSF gene promoter. The chain is CCAAT/enhancer-binding protein gamma (CEBPG) from Homo sapiens (Human).